Consider the following 226-residue polypeptide: Ribosome-recycling factor, mitochondrial (226 aa).

This sequence belongs to the RRF family.

The protein localises to the mitochondrion. Its function is as follows. Necessary for protein synthesis in mitochondria. Functions as a ribosome recycling factor in mitochondria. The polypeptide is Ribosome-recycling factor, mitochondrial (RRF1) (Eremothecium gossypii (strain ATCC 10895 / CBS 109.51 / FGSC 9923 / NRRL Y-1056) (Yeast)).